Consider the following 557-residue polypeptide: Polypyrimidine tract-binding protein 1 (557 aa).

Position 1 is an N-acetylmethionine (methionine 1). Phosphoserine is present on serine 16. 3 consecutive RRM domains span residues 59-143 (RVIH…SSPN), 184-260 (LRII…FSKL), and 363-437 (SVLL…LSKH). Lysine 65 is covalently cross-linked (Glycyl lysine isopeptide (Lys-Gly) (interchain with G-Cter in SUMO2)). Tyrosine 127 is subject to Phosphotyrosine. Threonine 138 is subject to Phosphothreonine. Residue serine 141 is modified to Phosphoserine. Lysine 218 is covalently cross-linked (Glycyl lysine isopeptide (Lys-Gly) (interchain with G-Cter in SUMO2)). Serine 459 carries the post-translational modification Phosphoserine. In terms of domain architecture, RRM 4 spans 480 to 555 (ATLHLSNIPP…HHLRVSFSKS (76 aa)).

As to quaternary structure, monomer. Part of a ternary complex containing KHSRP, PTBP1, PTBP2 and HNRPH1. Interacts with RAVER1 and SFPQ. Interacts with IVNS1ABP (via BACK domain); the interaction is direct.

The protein resides in the nucleus. In terms of biological role, plays a role in pre-mRNA splicing and in the regulation of alternative splicing events. Activates exon skipping of its own pre-mRNA during muscle cell differentiation. Binds to the polypyrimidine tract of introns. May promote RNA looping when bound to two separate polypyrimidine tracts in the same pre-mRNA. May promote the binding of U2 snRNP to pre-mRNA. Cooperates with RAVER1 to modulate switching between mutually exclusive exons during maturation of the TPM1 pre-mRNA. Represses the splicing of MAPT/Tau exon 10. Binds to polypyrimidine-rich controlling element (PCE) of CFTR and promotes exon skipping of CFTR exon 9, thereby antagonizing TIA1 and its role in exon inclusion of CFTR exon 9. Plays a role in the splicing of pyruvate kinase PKM by binding repressively to a polypyrimidine tract flanking PKM exon 9, inhibiting exon 9 inclusion and resulting in exon 10 inclusion and production of the PKM M2 isoform. In case of infection by picornaviruses, binds to the viral internal ribosome entry site (IRES) and stimulates the IRES-mediated translation. In Homo sapiens (Human), this protein is Polypyrimidine tract-binding protein 1 (PTBP1).